A 54-amino-acid chain; its full sequence is Phosphoribosylformylglycinamidine synthase subunit PurQ (54 aa).

The Glutamine amidotransferase type-1 domain maps to 1–51; the sequence is MHDIAGVTNETGNVLGMMPHPERAVEALLGGTDGLGVFQSLINQTEGADVR. Residues histidine 20 and glutamate 22 contribute to the active site.

In terms of assembly, part of the FGAM synthase complex composed of 1 PurL, 1 PurQ and 2 PurS subunits.

Its subcellular location is the cytoplasm. It carries out the reaction N(2)-formyl-N(1)-(5-phospho-beta-D-ribosyl)glycinamide + L-glutamine + ATP + H2O = 2-formamido-N(1)-(5-O-phospho-beta-D-ribosyl)acetamidine + L-glutamate + ADP + phosphate + H(+). The catalysed reaction is L-glutamine + H2O = L-glutamate + NH4(+). It functions in the pathway purine metabolism; IMP biosynthesis via de novo pathway; 5-amino-1-(5-phospho-D-ribosyl)imidazole from N(2)-formyl-N(1)-(5-phospho-D-ribosyl)glycinamide: step 1/2. Part of the phosphoribosylformylglycinamidine synthase complex involved in the purines biosynthetic pathway. Catalyzes the ATP-dependent conversion of formylglycinamide ribonucleotide (FGAR) and glutamine to yield formylglycinamidine ribonucleotide (FGAM) and glutamate. The FGAM synthase complex is composed of three subunits. PurQ produces an ammonia molecule by converting glutamine to glutamate. PurL transfers the ammonia molecule to FGAR to form FGAM in an ATP-dependent manner. PurS interacts with PurQ and PurL and is thought to assist in the transfer of the ammonia molecule from PurQ to PurL. The polypeptide is Phosphoribosylformylglycinamidine synthase subunit PurQ (purQ) (Lacticaseibacillus casei (Lactobacillus casei)).